A 252-amino-acid chain; its full sequence is Geranylgeranylglyceryl phosphate synthase (252 aa).

Mg(2+)-binding residues include Asp26 and Ser55. Sn-glycerol 1-phosphate-binding positions include 174-180, 205-206, and 227-228; these read YLEAGSG, GG, and GT.

Belongs to the GGGP/HepGP synthase family. Group II subfamily. As to quaternary structure, homotetramer. Homohexamer. Mg(2+) serves as cofactor.

The protein localises to the cytoplasm. The catalysed reaction is sn-glycerol 1-phosphate + (2E,6E,10E)-geranylgeranyl diphosphate = sn-3-O-(geranylgeranyl)glycerol 1-phosphate + diphosphate. It functions in the pathway membrane lipid metabolism; glycerophospholipid metabolism. In terms of biological role, prenyltransferase that catalyzes the transfer of the geranylgeranyl moiety of geranylgeranyl diphosphate (GGPP) to the C3 hydroxyl of sn-glycerol-1-phosphate (G1P). This reaction is the first ether-bond-formation step in the biosynthesis of archaeal membrane lipids. The sequence is that of Geranylgeranylglyceryl phosphate synthase from Thermococcus kodakarensis (strain ATCC BAA-918 / JCM 12380 / KOD1) (Pyrococcus kodakaraensis (strain KOD1)).